We begin with the raw amino-acid sequence, 191 residues long: uncharacterized protein (191 aa).

Disordered stretches follow at residues 1–42 (MSEE…DADA) and 145–191 (QNQE…IDLD). Basic and acidic residues-rich tracts occupy residues 11–26 (PRPD…RATG) and 147–178 (QERR…RDEG).

In terms of assembly, it may form a heterotetramer of two glucokinase subunits (glk) with two ORF2 proteins.

Functionally, may be involved in glucose transport or metabolism. This is an uncharacterized protein from Streptomyces coelicolor (strain ATCC BAA-471 / A3(2) / M145).